A 715-amino-acid polypeptide reads, in one-letter code: Coiled-coil domain-containing protein 170 (715 aa).

Coiled coils occupy residues 30–286 (VTRE…AGQQ), 360–418 (ESRD…LVSG), and 478–656 (ENKT…FREV). The tract at residues 355–591 (MDSREESRDR…DLNKSRDQLE (237 aa)) is required for binding to microtubules and Golgi apparatus location.

As to quaternary structure, binds Golgi-associated microtubules.

It is found in the golgi apparatus. Its function is as follows. Plays a role in Golgi-associated microtubules organization and stabilization. The sequence is that of Coiled-coil domain-containing protein 170 from Homo sapiens (Human).